Here is a 465-residue protein sequence, read N- to C-terminus: Serine carboxypeptidase 24 (465 aa).

Residues 1–24 (MARTHFIFLLLVALLSTTFPSSSS) form the signal peptide. N-linked (GlcNAc...) asparagine glycans are attached at residues Asn54, Asn105, and Asn139. Disulfide bonds link Cys88–Cys349, Cys249–Cys260, and Cys285–Cys317. Ser181 is an active-site residue. 3 N-linked (GlcNAc...) asparagine glycosylation sites follow: Asn250, Asn293, and Asn338. A propeptide spans 287-316 (AAQQKKNTTGFFVRMKNTLLRRRLVSGYDP) (linker peptide). Residues Asp386 and His438 contribute to the active site.

Belongs to the peptidase S10 family. Heterodimer. Post-translationally, N-glycosylated. In terms of tissue distribution, expressed in shoots, leaves, cauline leaves, siliques and flowers. Expressed a low levels in roots and stems.

It is found in the secreted. The protein localises to the extracellular space. The enzyme catalyses Preferential release of a C-terminal arginine or lysine residue.. Completely inhibited by phenylmethylsulfonyl fluoride (PMSF) and partially by leupeptin. Its function is as follows. Active serine carboxypeptidase with broad substrate preference, including basic and hydrophilic groups. Processes a protein involved in an early event in the brassinosteroid signaling pathway. The sequence is that of Serine carboxypeptidase 24 (SCPL24) from Arabidopsis thaliana (Mouse-ear cress).